The primary structure comprises 334 residues: 6-phosphogluconolactonase (334 aa).

Belongs to the cycloisomerase 2 family.

The enzyme catalyses 6-phospho-D-glucono-1,5-lactone + H2O = 6-phospho-D-gluconate + H(+). The protein operates within carbohydrate degradation; pentose phosphate pathway; D-ribulose 5-phosphate from D-glucose 6-phosphate (oxidative stage): step 2/3. Functionally, catalyzes the hydrolysis of 6-phosphogluconolactone to 6-phosphogluconate. The polypeptide is 6-phosphogluconolactonase (Yersinia pseudotuberculosis serotype O:1b (strain IP 31758)).